Consider the following 1355-residue polypeptide: NACHT, LRR and PYD domains-containing protein 1 homolog (1355 aa).

Residues 257-458 (KTVILCGDSG…SVPLLCWMVC (202 aa)) enclose the NACHT domain. 263–270 (GDSGRGKS) is a binding site for ATP. The interval 977 to 1109 (DSDQWVQVEP…FHAKILQPMF (133 aa)) is ZU5. The FIIND domain occupies 977 to 1252 (DSDQWVQVEP…NKTESDLFQS (276 aa)). Residues 1110 to 1252 (SPKTVLVKLG…NKTESDLFQS (143 aa)) are UPA. Positions 1278–1354 (LIKSVENVDT…NLLNHLPSSD (77 aa)) constitute a CARD domain.

This sequence belongs to the NLRP family. In terms of assembly, interacts with the C-terminal part of nlrp1 (NACHT, LRR and PYD domains-containing protein 1, C-terminus) in absence of pathogens and other damage-associated signals. Interacts with the N-terminal part of nlrp1 (NACHT, LRR and PYD domains-containing protein 1, N-terminus) in absence of pathogens and other damage-associated signals. Homomultimer; forms the nlrp1 inflammasome polymeric complex, a filament composed of homopolymers of this form in response to pathogens and other damage-associated signals. The nlrp1 inflammasome polymeric complex associates with pycard/asc. Interacts (via CARD domain) with pycard/asc (via CARD domain); leading to pro-inflammatory caspases (caspa and/or caspb) recruitment. Pro-caspase-a and pro-caspase-b filament formation increases local enzyme concentration, resulting in trans-autocleavage and activation. Active caspa and caspb then processes il1b and il18 precursors, leading to the release of mature cytokines in the extracellular milieu and inflammatory response. In terms of processing, autocatalytically cleaved. Autocatalytic cleavage in FIIND region occurs constitutively, prior to activation signals, and is required for inflammasome activity (IL1B release), possibly by facilitating pro-inflammatory caspases (caspa and/or caspb) binding. Both N- and C-terminal parts remain associated non-covalently. Ubiquitinated in response to pathogen-associated signals, leading to its degradation by the proteasome and subsequent release of the cleaved C-terminal part of the protein (NACHT, LRR and PYD domains-containing protein 1, C-terminus), which polymerizes and forms the nlrp1 inflammasome. Expressed in adult spleen, head kidney, gill and skin and also in the embryo.

Its subcellular location is the cytoplasm. The protein resides in the inflammasome. With respect to regulation, nlrp1 inflammasome is activated by pathogens and other damage-associated signals: activation promotes ubiquitination and degradation of the N-terminal part, releasing the cleaved C-terminal part of the protein (NACHT, LRR and PYD domains-containing protein 1, C-terminus), which polymerizes and forms the nlrp1 inflammasome. In terms of biological role, acts as the sensor component of the nlrp1 inflammasome, which mediates inflammasome activation in response to various pathogen-associated signals, leading to subsequent pyroptosis. Inflammasomes are supramolecular complexes that assemble in the cytosol in response to pathogens and other damage-associated signals and play critical roles in innate immunity and inflammation. Acts as a recognition receptor (PRR): recognizes specific pathogens and other damage-associated signals, and mediates the formation of the inflammasome polymeric complex. In response to pathogen-associated signals, the N-terminal part of nlrp1 is degraded by the proteasome, releasing the cleaved C-terminal part of the protein (NACHT, LRR and PYD domains-containing protein 1, C-terminus), which polymerizes to initiate the formation of the inflammasome complex: the inflammasome recruits and activate pro-inflammatory caspases (caspa and/or caspb), leading to pyroptosis. Constitutes the precursor of the nlrp1 inflammasome, which mediates autoproteolytic processing within the FIIND domain to generate the N-terminal and C-terminal parts, which are associated non-covalently in absence of pathogens and other damage-associated signals. Its function is as follows. Regulatory part that prevents formation of the nlrp1 inflammasome: in absence of pathogens and other damage-associated signals, interacts with the C-terminal part of nlrp1 (NACHT, LRR and PYD domains-containing protein 1, C-terminus), preventing activation of the nlrp1 inflammasome. In response to pathogen-associated signals, this part is ubiquitinated and degraded by the proteasome, releasing the cleaved C-terminal part of the protein, which polymerizes and forms the nlrp1 inflammasome. Functionally, constitutes the active part of the nlrp1 inflammasome. In absence of pathogens and other damage-associated signals, interacts with the N-terminal part of nlrp1 (NACHT, LRR and PYD domains-containing protein 1, N-terminus), preventing activation of the nlrp1 inflammasome. In response to pathogen-associated signals, the N-terminal part of nlrp1 is degraded by the proteasome, releasing this form, which polymerizes to form the nlrp1 inflammasome complex: the nlrp1 inflammasome complex then directly recruits and activates pro-inflammatory caspases (caspa and/or caspb) activation, leading to subsequent pyroptosis. This chain is NACHT, LRR and PYD domains-containing protein 1 homolog, found in Danio rerio (Zebrafish).